Consider the following 357-residue polypeptide: Acyl-coenzyme A:6-aminopenicillanic-acid-acyltransferase 40 kDa form (357 aa).

6-aminopenicillanate contacts are provided by aspartate 121 and arginine 310.

The protein belongs to the peptidase C45 family. In terms of assembly, the active form of the enzyme results from processing of the 40-kDa monomeric precursor to a heterodimer containing subunits of 11 and 29 kDa. Post-translationally, the pre-AAT protein is synthesized as 40 kDa precursor which is then self-processed into an 11 kDa (protein A) and a 29 kDa (protein B). The B protein carries AAT activity.

Its subcellular location is the peroxisome matrix. It carries out the reaction isopenicillin N + phenylacetyl-CoA + H2O = penicillin G + L-2-aminoadipate + CoA + H(+). The protein operates within antibiotic biosynthesis; penicillin G biosynthesis; penicillin G from L-alpha-aminoadipate and L-cysteine and L-valine: step 3/3. In terms of biological role, nonribosomal peptide synthetase; part of the gene cluster that mediates the biosynthesis of penicillin, the world's most important antibiotic. AatA catalyzes the exchange of the alpha-aminoadipyl side chain of isopenicillin N for phenylacetic acid to yield penicillin. This step occurs in the peroxisomal matrix and the penM and paaT transporters are involved in the isopenicillin N and phenylacetic acid import into the peroxisome, respectively. The penicillin biosynthesis occurs via 3 enzymatic steps, the first corresponding to the production of the tripeptide N-[(5S)-5-amino-5-carboxypentanoyl]-L-cysteinyl-D-valine (LLD-ACV or ACV) by the NRPS acvA. The tripeptide ACV is then cyclized to isopenicillin N (IPN) by the isopenicillin N synthase ipnA that forms the beta-lactam nucleus. Finally, the alpha-aminoadipyl side chain is exchanged for phenylacetic acid by the isopenicillin N acyltransferase penDE to yield penicillin in the peroxisomal matrix. In Emericella nidulans (strain FGSC A4 / ATCC 38163 / CBS 112.46 / NRRL 194 / M139) (Aspergillus nidulans), this protein is Acyl-coenzyme A:6-aminopenicillanic-acid-acyltransferase 40 kDa form.